Here is a 743-residue protein sequence, read N- to C-terminus: Serine-rich coiled-coil domain-containing protein 1 (743 aa).

Disordered regions lie at residues 1–125 (MGDS…SRNK) and 156–175 (KSEG…SVKQ). A compositionally biased stretch (low complexity) spans 29–56 (LPSSPSSSNTVGVHSSSPSSTNSSSGST). Residues 81-102 (EPTNQNLSISNGAQPGQSSMQK) are compositionally biased toward polar residues. The stretch at 672-713 (MKDECSMLKLQLKEKDELISQLQEELEKVQHLQKAFASRVDK) forms a coiled coil.

Belongs to the CCSER family.

The chain is Serine-rich coiled-coil domain-containing protein 1 (CCSER1) from Bos taurus (Bovine).